We begin with the raw amino-acid sequence, 171 residues long: 3-hydroxydecanoyl-[acyl-carrier-protein] dehydratase (171 aa).

Residue His-70 is part of the active site.

It belongs to the thioester dehydratase family. FabA subfamily. In terms of assembly, homodimer.

It localises to the cytoplasm. The enzyme catalyses a (3R)-hydroxyacyl-[ACP] = a (2E)-enoyl-[ACP] + H2O. It catalyses the reaction (3R)-hydroxydecanoyl-[ACP] = (2E)-decenoyl-[ACP] + H2O. It carries out the reaction (2E)-decenoyl-[ACP] = (3Z)-decenoyl-[ACP]. It participates in lipid metabolism; fatty acid biosynthesis. In terms of biological role, necessary for the introduction of cis unsaturation into fatty acids. Catalyzes the dehydration of (3R)-3-hydroxydecanoyl-ACP to E-(2)-decenoyl-ACP and then its isomerization to Z-(3)-decenoyl-ACP. Can catalyze the dehydratase reaction for beta-hydroxyacyl-ACPs with saturated chain lengths up to 16:0, being most active on intermediate chain length. The sequence is that of 3-hydroxydecanoyl-[acyl-carrier-protein] dehydratase from Ectopseudomonas mendocina (strain ymp) (Pseudomonas mendocina).